A 55-amino-acid polypeptide reads, in one-letter code: Seripauperin-7 (55 aa).

The first 20 residues, 1–20 (MVKLTSIAAGVAAIAAGASA), serve as a signal peptide directing secretion.

Belongs to the SRP1/TIP1 family. Seripauperin subfamily.

The sequence is that of Seripauperin-7 (PAU7) from Saccharomyces cerevisiae (strain ATCC 204508 / S288c) (Baker's yeast).